The primary structure comprises 191 residues: Gene BABR protein 1 (191 aa).

The chain is Gene BABR protein 1 from Babesia bovis.